A 153-amino-acid chain; its full sequence is MTTRRGRRALLIAGGVGLLALAAALVLNALRSNLVFFFSPTQVHAHEAPSSGSFRVGGLVRAGSVERAADGLTLRFVVTDTVREVPVAYTGLLPALFREGKGVVVAGTMGADGVFRATEVLAKHNENYMPPQAADALRQAGALPSATLQTEAR.

Topologically, residues 1-8 are cytoplasmic; the sequence is MTTRRGRR. A helical; Signal-anchor for type II membrane protein membrane pass occupies residues 9–29; that stretch reads ALLIAGGVGLLALAAALVLNA. Topologically, residues 30-153 are periplasmic; that stretch reads LRSNLVFFFS…PSATLQTEAR (124 aa). 2 residues coordinate heme: H124 and Y128.

The protein belongs to the CcmE/CycJ family.

The protein localises to the cell inner membrane. Functionally, heme chaperone required for the biogenesis of c-type cytochromes. Transiently binds heme delivered by CcmC and transfers the heme to apo-cytochromes in a process facilitated by CcmF and CcmH. This chain is Cytochrome c-type biogenesis protein CcmE, found in Bordetella parapertussis (strain 12822 / ATCC BAA-587 / NCTC 13253).